Reading from the N-terminus, the 601-residue chain is AT-rich interactive domain-containing protein 3A (601 aa).

The tract at residues 1–224 (MKLQAVMETL…HMASQMPPPD (224 aa)) is disordered. The span at 60–89 (MAALAAMRAAAAGLGHPSSPGGSEDGPPIS) shows a compositional bias: low complexity. Phosphoserine occurs at positions 78, 82, and 89. Phosphothreonine is present on threonine 99. Serine 102 is modified (phosphoserine). Positions 114 to 123 (GHAEGDRHLM) are enriched in basic and acidic residues. Phosphoserine is present on serine 127. The tract at residues 128 to 165 (DDDDTKSKWEEQELEELGEEEEEEEEEDDFEEEEEEEE) is acidic. Positions 139–166 (QELEELGEEEEEEEEEDDFEEEEEEEEG) are enriched in acidic residues. Positions 243-335 (DPKRKEFLDD…YLYPYECERR (93 aa)) constitute an ARID domain. Serine 358 and serine 367 each carry phosphoserine. Residues lysine 403, lysine 404, lysine 457, and lysine 467 each participate in a glycyl lysine isopeptide (Lys-Gly) (interchain with G-Cter in SUMO2) cross-link. Residues 449 to 546 (AALEQLREKL…GVLFAQPPPP (98 aa)) form the REKLES domain. Residues 450–493 (ALEQLREKLESTEPPEKKMALVADEQQRLMQRAVQQSFLAMTAQ) are important for nuclear localization. A homodimerization region spans residues 495 to 518 (PMNIRINSQASESRQDSAVSLTSA). The tract at residues 542–562 (QPPPPTAPSAPGKGGVSSIGT) is important for cytoplasmic localization. Positions 545–601 (PPTAPSAPGKGGVSSIGTNTTTGSRTGASGSTVSGGQVGLPGVSTPTMSSTSNNSLP) are disordered. 2 stretches are compositionally biased toward low complexity: residues 559–579 (SIGT…TVSG) and 588–601 (STPT…NSLP).

Homodimer. Heterodimer with ARID3B. Interacts with E2F1. Interacts with GTF2I and BTK. In terms of tissue distribution, B-cell specific in the adult. Expressed in B-cell progenitors, down-regulated in the immature B-cell stage, and is up-regulated again at later stages of B-lymphocyte differentiation.

The protein localises to the nucleus. The protein resides in the cytoplasm. Transcription factor involved in B-cell differentiation. Binds a VH promoter proximal site necessary for induced mu-heavy-chain transcription. Binds the minor groove of a restricted ATC sequence that is sufficient for nuclear matrix association. This sequence motif is present in matrix-associating regions (MARS) proximal to the promoter and flanking E mu. Activates E mu-driven transcription by binding these sites. May be involved in the control of cell cycle progression by the RB1/E2F1 pathway. This is AT-rich interactive domain-containing protein 3A (Arid3a) from Mus musculus (Mouse).